The following is a 227-amino-acid chain: MTARALDELVEPGWAKALEPVADQVTAMGQFLRAELAAGRKYLPAGPNVLRAFTFPFDQVRILIVGQDPYPTPGHAVGLSFSVAPDVRPLPRSLSNIFQEYADDLGYPMPACGDLTPWAQRGVMLLNRVLTVRPSNPASHRGKGWEAVTECAIRALAARSQPMVAILWGRDASTLKSMLAGGDCASIESPHPSPLSASRGFFGSRPFSRANELLTGRGADPIDWRLP.

D68 serves as the catalytic Proton acceptor.

Belongs to the uracil-DNA glycosylase (UDG) superfamily. UNG family.

It is found in the cytoplasm. The enzyme catalyses Hydrolyzes single-stranded DNA or mismatched double-stranded DNA and polynucleotides, releasing free uracil.. Its function is as follows. Excises uracil residues from the DNA which can arise as a result of misincorporation of dUMP residues by DNA polymerase or due to deamination of cytosine. The protein is Uracil-DNA glycosylase of Mycobacterium ulcerans (strain Agy99).